A 337-amino-acid polypeptide reads, in one-letter code: MGKIKIGINGFGRIGRLVARVALQSEDVELVAVNDPFITTEYMTYMFKYDTVHGQWKHHEVKVKDSKTLIFGTKEVAVFGCRNPEEIPWAAAGAEYVVESTGVFTDKDKAAAHLKGGAKKVVISAPSKDAPMFVVGVNEKEYKSDVNIVSNASCTTNCLAPLAKVINDRFGIVEGLMTTVHAITATQKTVDGPSMKDWRGGRAASFNIIPSSTGAAKAVGKVLPALNGKLTGMAFRVPTVDVSVVDLTVRLEKPASYDQIKAAIKEEAEGKLKGILGYVEEDLVSTDFQGDSRSSIFDAKAGIALSDTFVKLVSWYDNEWGYSTRVIDLIRHMHSTN.

Residues 13-14, Asp-35, and Arg-82 contribute to the NAD(+) site; that span reads RI. D-glyceraldehyde 3-phosphate-binding positions include 153-155, Thr-184, 213-214, and Arg-236; these read SCT and TG. Cys-154 functions as the Nucleophile in the catalytic mechanism. Residue Asn-318 coordinates NAD(+).

Belongs to the glyceraldehyde-3-phosphate dehydrogenase family. As to quaternary structure, homotetramer.

It localises to the cytoplasm. It carries out the reaction D-glyceraldehyde 3-phosphate + phosphate + NAD(+) = (2R)-3-phospho-glyceroyl phosphate + NADH + H(+). It participates in carbohydrate degradation; glycolysis; pyruvate from D-glyceraldehyde 3-phosphate: step 1/5. In terms of biological role, key enzyme in glycolysis that catalyzes the first step of the pathway by converting D-glyceraldehyde 3-phosphate (G3P) into 3-phospho-D-glyceroyl phosphate. Essential for the maintenance of cellular ATP levels and carbohydrate metabolism. The sequence is that of Glyceraldehyde-3-phosphate dehydrogenase 3, cytosolic (GAPC3) from Oryza sativa subsp. japonica (Rice).